The following is a 75-amino-acid chain: Mu-conotoxin GIIIA (75 aa).

The N-terminal stretch at 1–20 (MMSKLGVLLTICLLLFPLTA) is a signal peptide. The propeptide occupies 21–51 (LPMDGDEPANRPVERMQDNISSEQYPLFEKR). Intrachain disulfides connect Cys-54-Cys-66, Cys-55-Cys-71, and Cys-61-Cys-72. 2 positions are modified to 4-hydroxyproline; partial: Pro-57 and Pro-58. Pro-68 carries the 4-hydroxyproline modification. At Ala-73 the chain carries Alanine amide.

The protein belongs to the conotoxin M superfamily. Post-translationally, hydroxylated; hydroxylations improve the ability to block Nav1.4/SCN4A sodium channels but does not affect folding. As to expression, expressed by the venom duct.

It localises to the secreted. Mu-conotoxins block voltage-gated sodium channels (Nav). This toxin potently blocks rat Nav1.4/SCN4A (IC(50)= 19-110 nM). It also moderately blocks rNav1.1/SCN1A (Kd=260 nM), rNav1.2/SCN2A (IC(50)=2.7-17.8 uM), and mNav1.6/SCN8A (IC(50)=680 nM). The inhibition is reversible. In vivo, induces paralysis to an isolated skeletal muscle preparation from frog (cutaneous pectoralis) within a few minutes. The polypeptide is Mu-conotoxin GIIIA (Conus geographus (Geography cone)).